The primary structure comprises 1146 residues: Elicitor of plant defense protein 1 (1146 aa).

Disordered regions lie at residues 25–75 and 156–226; these read DPLP…RLSN and ARPP…PRQG. Residues 164-177 show a composition bias toward basic and acidic residues; sequence RAERIKAEDSDQSG. The region spanning 246–500 is the uDENN domain; the sequence is PLNTDPNMHP…NLCTEAFSPL (255 aa). Residues 522 to 656 form the cDENN domain; sequence VNEIPGSRTI…HRRKLHALLQ (135 aa). Positions 658–1016 constitute a dDENN domain; that stretch reads AAPAKLRYGV…ERETKPGTTA (359 aa). The tract at residues 730-806 is disordered; sequence LHSKVDPNKP…RRSSSFGVDK (77 aa). The segment covering 732–743 has biased composition (basic and acidic residues); the sequence is SKVDPNKPDRPG. Over residues 744 to 760 the composition is skewed to low complexity; sequence TSKSTRTSPPSSVSPVS. Residues 769–783 are compositionally biased toward polar residues; sequence TPVSRSDSGFALTST. Residues 784–797 are compositionally biased toward basic and acidic residues; that stretch reads LREKRSRNFDEKTR. The segment at 883 to 931 adopts a Phorbol-ester/DAG-type zinc-finger fold; it reads GHCFNWEEGALSSSCSVCDDRAEGDGIYKCSGCSAFAHGRCLGCVSLAC. Residues 1121–1146 form a disordered region; it reads PRPEQRGTRGLVRKQVPSMLGTSPTN.

Belongs to the EPD1 elicitor family. As to quaternary structure, interacts with host cotton EIR5A (AC A0A5J5T2N2) and EIR5D (AC A0A5J5NT52) and host N.benthamiana EIR (AC P0DXJ0).

It localises to the secreted. The protein localises to the host cell. Functionally, acts as an elicitor that triggers defense responses in both Nicotiana benthamiana and cotton plants. Triggers the accumulation of reactive oxygen species (ROS) and the activation of cell death in cotton plants. Induces significantly enhanced resistance of Nicotiana benthamiana to both the broad-host-range filamentous pathogen Botrytis cinerea and the semibiotrophic pathogen Phytophthora capsici. Stimulates the expression of EIR5A (AC A0A5J5T2N2) and EIR5D (AC A0A5J5NT52) in cotton plants and recognition of EPD1 potentiates EIRs to enhance cotton PAMP-triggered immunity (PTI). This is Elicitor of plant defense protein 1 from Verticillium dahliae (strain VdLs.17 / ATCC MYA-4575 / FGSC 10137) (Verticillium wilt).